Consider the following 412-residue polypeptide: CinA-like protein (412 aa).

Belongs to the CinA family.

This is CinA-like protein from Syntrophotalea carbinolica (strain DSM 2380 / NBRC 103641 / GraBd1) (Pelobacter carbinolicus).